The primary structure comprises 319 residues: Forkhead box protein B1 (319 aa).

Residues 13–107 (KPPYSYISLT…ENGSFLRRRK (95 aa)) constitute a DNA-binding region (fork-head). A disordered region spans residues 278-310 (LSNSSPSMSPTSPQTATSQSSPATPSDTLTNPS). A compositionally biased stretch (low complexity) spans 279-305 (SNSSPSMSPTSPQTATSQSSPATPSDT).

As to expression, in early gastrulae, expressed in the inner layer of the posterior dorsal ectoderm and in non-involuted mesoderm. By the mid-gastrula stage, expressed solely in the posterior ectoderm. At the end of gastrulation, expressed in ectodermal regions fated to become diencephalon, midbrain and hindbrain, and weakly expressed in regions fated to become spinal cord and tailbud. At the neurula stage, expressed in the midbrain and posterior forebrain (diencephalon) but not in the more anterior forebrain (telencephalon). Also expressed posteriorly in rhombomere 5. At tailbud stages, expression remains in the anterior brain and is also detectable along the length of the central nervous system and in the tailbud.

The protein resides in the nucleus. Functionally, probable transcription factor. May be involved in the early anteroposterior patterning of the neuroectoderm. The chain is Forkhead box protein B1 from Xenopus laevis (African clawed frog).